A 404-amino-acid chain; its full sequence is L-cysteine:1D-myo-inositol 2-amino-2-deoxy-alpha-D-glucopyranoside ligase (404 aa).

Cys32 lines the Zn(2+) pocket. Residues Cys32–Thr35, Thr47, and Asn70–Thr72 contribute to the L-cysteinyl-5'-AMP site. The 'HIGH' region motif lies at Ile34–His44. The 'ERGGDP' region motif lies at Glu176–Pro181. Trp216 is an L-cysteinyl-5'-AMP binding site. Cys220 serves as a coordination point for Zn(2+). Gly238–Asp240 is an L-cysteinyl-5'-AMP binding site. Residue His245 participates in Zn(2+) binding. Ile272 provides a ligand contact to L-cysteinyl-5'-AMP. A 'KMSKS' region motif is present at residues Lys278–Ser282.

Belongs to the class-I aminoacyl-tRNA synthetase family. MshC subfamily. In terms of assembly, monomer. Requires Zn(2+) as cofactor.

The catalysed reaction is 1D-myo-inositol 2-amino-2-deoxy-alpha-D-glucopyranoside + L-cysteine + ATP = 1D-myo-inositol 2-(L-cysteinylamino)-2-deoxy-alpha-D-glucopyranoside + AMP + diphosphate + H(+). Catalyzes the ATP-dependent condensation of GlcN-Ins and L-cysteine to form L-Cys-GlcN-Ins. The polypeptide is L-cysteine:1D-myo-inositol 2-amino-2-deoxy-alpha-D-glucopyranoside ligase (mshC) (Corynebacterium glutamicum (strain ATCC 13032 / DSM 20300 / JCM 1318 / BCRC 11384 / CCUG 27702 / LMG 3730 / NBRC 12168 / NCIMB 10025 / NRRL B-2784 / 534)).